The following is a 1057-amino-acid chain: Probable E3 ubiquitin-protein ligase HERC4 (1057 aa).

RCC1 repeat units follow at residues 1 to 51 (MLCW…FVLD), 52 to 101 (DGTV…ALND), 102 to 154 (KGQV…ALSK), 156 to 207 (SEVF…VLTL), 208 to 259 (SGAI…ALTK), 261 to 311 (GGVF…AFVP), and 313 to 368 (SGRI…KRIF). One can recognise an HECT domain in the interval 730–1057 (KNIDYKKPLK…IDHNEGFSLI (328 aa)). Cys1025 acts as the Glycyl thioester intermediate in catalysis.

In terms of tissue distribution, expressed in brain and testis and detected in heart and placenta.

It is found in the cytoplasm. The protein localises to the cytosol. It catalyses the reaction S-ubiquitinyl-[E2 ubiquitin-conjugating enzyme]-L-cysteine + [acceptor protein]-L-lysine = [E2 ubiquitin-conjugating enzyme]-L-cysteine + N(6)-ubiquitinyl-[acceptor protein]-L-lysine.. Its pathway is protein modification; protein ubiquitination. Probable E3 ubiquitin-protein ligase involved in either protein trafficking or in the distribution of cellular structures. Required for spermatozoon maturation and fertility, and for the removal of the cytoplasmic droplet of the spermatozoon. E3 ubiquitin-protein ligases accept ubiquitin from an E2 ubiquitin-conjugating enzyme in the form of a thioester and then directly transfer it to targeted substrates. In Homo sapiens (Human), this protein is Probable E3 ubiquitin-protein ligase HERC4 (HERC4).